The following is a 51-amino-acid chain: Large ribosomal subunit protein eL39 (51 aa).

This sequence belongs to the eukaryotic ribosomal protein eL39 family. Interacts with IMPACT.

This Gallus gallus (Chicken) protein is Large ribosomal subunit protein eL39 (RPL39).